A 540-amino-acid polypeptide reads, in one-letter code: Terminase large subunit (540 aa).

Mn(2+) contacts are provided by D352, D424, and D523.

This sequence belongs to the skunavirus terminase large subunit family. Interacts with the terminase small subunit; the active complex is probably heterooligomeric. Mn(2+) serves as cofactor. It depends on Mg(2+) as a cofactor.

Functionally, probable terminase large subunit. The terminase large subunit acts as an ATP driven molecular motor necessary for viral DNA translocation into empty capsids and as an endonuclease that cuts the viral genome to initiate and to end a packaging reaction. The terminase lies at a unique vertex of the procapsid and is composed of two subunits, a small terminase subunit involved in viral DNA recognition (packaging sequence), and a large terminase subunit possessing endonucleolytic and ATPase activities. Both terminase subunits heterooligomerize and are docked on the portal protein to form the packaging machine. The terminase large subunit exhibits endonuclease activity and cleaves the viral genome concatemer. This Lactococcus lactis (Lactococcus lactis bacteriophage p2) protein is Terminase large subunit.